A 230-amino-acid polypeptide reads, in one-letter code: Ribulose-phosphate 3-epimerase (230 aa).

Substrate is bound at residue serine 10. Residues histidine 35, aspartate 37, and histidine 68 each contribute to the a divalent metal cation site. Aspartate 37 acts as the Proton acceptor in catalysis. Substrate is bound by residues histidine 68, 146-149 (GFGG), 179-181 (DGG), and 201-202 (GS). An a divalent metal cation-binding site is contributed by aspartate 179. Aspartate 179 serves as the catalytic Proton donor.

Belongs to the ribulose-phosphate 3-epimerase family. As to quaternary structure, homohexamer. Requires a divalent metal cation as cofactor.

It catalyses the reaction D-ribulose 5-phosphate = D-xylulose 5-phosphate. It participates in carbohydrate degradation. Catalyzes the reversible epimerization of D-ribulose 5-phosphate to D-xylulose 5-phosphate. The protein is Ribulose-phosphate 3-epimerase of Synechocystis sp. (strain ATCC 27184 / PCC 6803 / Kazusa).